We begin with the raw amino-acid sequence, 448 residues long: Putative carbonic anhydrase 2 (448 aa).

The Alpha-carbonic anhydrase domain occupies 1 to 222 (AYRQTENLLY…PAERDVFRII (222 aa)). Residue His-19 coordinates Zn(2+). N-linked (GlcNAc...) asparagine glycosylation is found at Asn-139 and Asn-198. Residues 229–448 (RREEDDERGD…DKGDDKGDDN (220 aa)) are disordered. Over residues 245-280 (DDDDNYDDDDYYNDDYSNDDYYDDDYYYDDYDDDTD) the composition is skewed to acidic residues. 2 stretches are compositionally biased toward basic and acidic residues: residues 281–334 (DDHK…DDSG) and 342–354 (RDGR…RDRN). The N-linked (GlcNAc...) asparagine glycan is linked to Asn-314. Residues 357–368 (NGNGRENGGVRG) show a composition bias toward gly residues. Residues 370–379 (GNDRDGRRDN) show a composition bias toward basic and acidic residues. Asn-385 carries an N-linked (GlcNAc...) asparagine glycan. Residues 386 to 421 (GTRRGNGDDRGGRRNEDRGENRRGKDDQERESEDGR) are compositionally biased toward basic and acidic residues. Residues 422–435 (RRRRRFNGRRRRRG) are compositionally biased toward basic residues. Positions 436–448 (RGDDKGDDKGDDN) are enriched in basic and acidic residues.

It belongs to the alpha-carbonic anhydrase family. As to expression, component of the acid-insoluble and acid-soluble organic matrix of calcified layers of the shell (at protein level).

It localises to the secreted. It carries out the reaction hydrogencarbonate + H(+) = CO2 + H2O. Reversible hydration of carbon dioxide. This Lottia gigantea (Giant owl limpet) protein is Putative carbonic anhydrase 2.